The following is a 189-amino-acid chain: Peptidyl-tRNA hydrolase (189 aa).

Position 14 (Tyr-14) interacts with tRNA. The active-site Proton acceptor is the His-19. Residues Phe-64, Asn-66, and Asn-112 each coordinate tRNA.

The protein belongs to the PTH family. In terms of assembly, monomer.

It localises to the cytoplasm. It carries out the reaction an N-acyl-L-alpha-aminoacyl-tRNA + H2O = an N-acyl-L-amino acid + a tRNA + H(+). In terms of biological role, hydrolyzes ribosome-free peptidyl-tRNAs (with 1 or more amino acids incorporated), which drop off the ribosome during protein synthesis, or as a result of ribosome stalling. Catalyzes the release of premature peptidyl moieties from peptidyl-tRNA molecules trapped in stalled 50S ribosomal subunits, and thus maintains levels of free tRNAs and 50S ribosomes. This Erythrobacter litoralis (strain HTCC2594) protein is Peptidyl-tRNA hydrolase.